Consider the following 2057-residue polypeptide: Myosin heavy chain, non-muscle (2057 aa).

Residues H78–P128 form the Myosin N-terminal SH3-like domain. The region spanning D132–D867 is the Myosin motor domain. Residue G225–T232 coordinates ATP. Residues P250 to A260 form a 25 kDa/50 kDa junction region. The 50 kDa/20 kDa junction stretch occupies residues D722–F734. The segment at L745–H767 is actin-binding. The interval Q782–G798 is reactive sulfhydryl/actin-binding. The IQ domain maps to I870–A899. Residues K926 to G2016 adopt a coiled-coil conformation. Disordered stretches follow at residues E1124–I1144, S1782–A1802, and L2008–N2057. Positions S1343–T2010 are alpha-helical tailpiece (LMM). The interval S1343 to N2057 is light meromyosin (LMM). Basic and acidic residues predominate over residues S1782–T1792. The globular tailpiece stretch occupies residues K2011 to N2057. Phosphoserine occurs at positions 2021 and 2022. Residues S2044 to N2057 show a composition bias toward acidic residues.

This sequence belongs to the TRAFAC class myosin-kinesin ATPase superfamily. Myosin family. In terms of assembly, interacts with sau. Interacts with ck and Ubr3. In terms of processing, ubiquitinated. In terms of tissue distribution, in Johnston's organ, expressed in neurons and scolopale cells.

The protein localises to the cell projection. The protein resides in the cilium. Its subcellular location is the cytoplasm. Nonmuscle myosin appears to be responsible for cellularization. Required for morphogenesis and cytokinesis. Necessary for auditory transduction: plays a role in Johnston's organ organization by acting in scolopidial apical attachment. Interaction with the myosin ck may be important for this function. Localizes to and defines the trailing edge of cells during larval epidermal wound healing. This process is dependent on the phosphatidylinositol 4-phosphate 5-kinase sktl/skittles. This Drosophila melanogaster (Fruit fly) protein is Myosin heavy chain, non-muscle (zip).